We begin with the raw amino-acid sequence, 437 residues long: MSLNVDIGLGTYDFSKWGYIDVHKIKEVHIYDFDNTLFQTPLPNANIWSNQAIRILMAFNILANGGWFFDPHVLAATGDGVEVEEKRAWEGWWNEKIVSQARESIRRPDVLAVLLTGRNEGFRGIVEKIIASKGLDFQGVVFKLQAPDGFWPQTLNFKLWFFNEVYRHFLYINSTRIYEDRPSHIEAFSAWLTERKKKNKNADFEIIAVAEPPKYLKFKVEIALVRGMLTAHNLKAPSLKLPLYKFVKNVIATVVTVPVAELHHIRNAFFNIPIAEIMESVSANSSRRNSHDSNSTIICEPEYPPDTSFNSSPGRLWIVTAIGRYRDEYWTVRAEAAEGYDCEKIHEIDVADIPSLYGTILYVSMSTGIVKSEIGDIGAQQWKTLAPSERWILRTNIRKECTYDIRYKRPYVSSLKYSDDDLTAGRASPMTGPTKRK.

Serine 290 and serine 293 each carry phosphoserine. Threonine 296 is modified (phosphothreonine). Residues serine 418 and serine 428 each carry the phosphoserine modification.

This is an uncharacterized protein from Schizosaccharomyces pombe (strain 972 / ATCC 24843) (Fission yeast).